Here is a 257-residue protein sequence, read N- to C-terminus: Hydroxyacylglutathione hydrolase (257 aa).

7 residues coordinate Zn(2+): histidine 53, histidine 55, aspartate 57, histidine 58, histidine 109, aspartate 126, and histidine 164.

The protein belongs to the metallo-beta-lactamase superfamily. Glyoxalase II family. In terms of assembly, monomer. Zn(2+) is required as a cofactor.

The catalysed reaction is an S-(2-hydroxyacyl)glutathione + H2O = a 2-hydroxy carboxylate + glutathione + H(+). It participates in secondary metabolite metabolism; methylglyoxal degradation; (R)-lactate from methylglyoxal: step 2/2. Thiolesterase that catalyzes the hydrolysis of S-D-lactoyl-glutathione to form glutathione and D-lactic acid. This is Hydroxyacylglutathione hydrolase from Baumannia cicadellinicola subsp. Homalodisca coagulata.